Reading from the N-terminus, the 401-residue chain is 8-amino-7-oxononanoate synthase (401 aa).

A substrate-binding site is contributed by Arg-24. Position 111–112 (111–112) interacts with pyridoxal 5'-phosphate; the sequence is GF. Position 137 (His-137) interacts with substrate. Pyridoxal 5'-phosphate-binding residues include Ser-183, His-211, and Thr-240. N6-(pyridoxal phosphate)lysine is present on Lys-243. Substrate is bound at residue Thr-357.

Belongs to the class-II pyridoxal-phosphate-dependent aminotransferase family. BioF subfamily. As to quaternary structure, homodimer. It depends on pyridoxal 5'-phosphate as a cofactor.

It carries out the reaction 6-carboxyhexanoyl-[ACP] + L-alanine + H(+) = (8S)-8-amino-7-oxononanoate + holo-[ACP] + CO2. It functions in the pathway cofactor biosynthesis; biotin biosynthesis. Functionally, catalyzes the decarboxylative condensation of pimeloyl-[acyl-carrier protein] and L-alanine to produce 8-amino-7-oxononanoate (AON), [acyl-carrier protein], and carbon dioxide. The protein is 8-amino-7-oxononanoate synthase of Xanthomonas axonopodis pv. citri (strain 306).